The sequence spans 219 residues: Cytidylate kinase (219 aa).

10–18 provides a ligand contact to ATP; it reads GPAAAGKST.

It belongs to the cytidylate kinase family. Type 1 subfamily.

It localises to the cytoplasm. It catalyses the reaction CMP + ATP = CDP + ADP. It carries out the reaction dCMP + ATP = dCDP + ADP. The chain is Cytidylate kinase from Staphylococcus saprophyticus subsp. saprophyticus (strain ATCC 15305 / DSM 20229 / NCIMB 8711 / NCTC 7292 / S-41).